Here is a 351-residue protein sequence, read N- to C-terminus: THO complex subunit 3 (351 aa).

The interval 1–20 is disordered; it reads MAVPAAAMGPSALGQSGPGS. N-acetylalanine is present on Ala-2. 6 WD repeats span residues 53 to 94, 97 to 137, 139 to 178, 180 to 221, 222 to 261, and 264 to 303; these read AHSA…KENN, GHGD…CIAT, NTKGENINICWSPDGQTIAVGNKDDVVTFIDAKTHRSKAE, QFKF…QSIN, AHPSNCICIKFDPMGKYFATGSADALVSLWDVDELVCVRC, and RLDWPVRTLSFSHDGKMLASASEDHFIDIAEVETGDKLWE.

Belongs to the THOC3 family. In terms of assembly, component of the THO subcomplex, which is composed of THOC1, THOC2, THOC3, THOC5, THOC6 and THOC7. The THO subcomplex interacts with DDX39B to form the THO-DDX39B complex which multimerizes into a 28-subunit tetrameric assembly. Component of the transcription/export (TREX) complex at least composed of ALYREF/THOC4, DDX39B, SARNP/CIP29, CHTOP and the THO subcomplex; in the complex interacts with THOC2. TREX seems to have a dynamic structure involving ATP-dependent remodeling.

It localises to the nucleus. The protein localises to the nucleus speckle. Functionally, component of the THO subcomplex of the TREX complex which is thought to couple mRNA transcription, processing and nuclear export, and which specifically associates with spliced mRNA and not with unspliced pre-mRNA. Required for efficient export of polyadenylated RNA and spliced mRNA. The THOC1-THOC2-THOC3 core complex alone is sufficient to bind export factor NXF1-NXT1 and promote ATPase activity of DDX39B. TREX is recruited to spliced mRNAs by a transcription-independent mechanism, binds to mRNA upstream of the exon-junction complex (EJC) and is recruited in a splicing- and cap-dependent manner to a region near the 5' end of the mRNA where it functions in mRNA export to the cytoplasm via the TAP/NXF1 pathway. (Microbial infection) The TREX complex is essential for the export of Kaposi's sarcoma-associated herpesvirus (KSHV) intronless mRNAs and infectious virus production. In Homo sapiens (Human), this protein is THO complex subunit 3 (THOC3).